The chain runs to 187 residues: Elongation factor P (187 aa).

Belongs to the elongation factor P family.

The protein localises to the cytoplasm. Its pathway is protein biosynthesis; polypeptide chain elongation. Its function is as follows. Involved in peptide bond synthesis. Stimulates efficient translation and peptide-bond synthesis on native or reconstituted 70S ribosomes in vitro. Probably functions indirectly by altering the affinity of the ribosome for aminoacyl-tRNA, thus increasing their reactivity as acceptors for peptidyl transferase. In Fusobacterium nucleatum subsp. nucleatum (strain ATCC 25586 / DSM 15643 / BCRC 10681 / CIP 101130 / JCM 8532 / KCTC 2640 / LMG 13131 / VPI 4355), this protein is Elongation factor P.